The primary structure comprises 776 residues: 5-methyltetrahydropteroyltriglutamate--homocysteine methyltransferase (776 aa).

5-methyltetrahydropteroyltri-L-glutamate contacts are provided by residues 16 to 19 (RELK) and Lys-112. L-homocysteine is bound by residues 432 to 434 (IGS) and Glu-485. L-methionine-binding positions include 432–434 (IGS) and Glu-485. Residues 516-517 (RC) and Trp-562 contribute to the 5-methyltetrahydropteroyltri-L-glutamate site. Asp-600 provides a ligand contact to L-homocysteine. Position 600 (Asp-600) interacts with L-methionine. Glu-606 contacts 5-methyltetrahydropteroyltri-L-glutamate. Positions 642, 644, and 666 each coordinate Zn(2+). Residue His-695 is the Proton donor of the active site. Cys-727 serves as a coordination point for Zn(2+). The segment at 755–776 (HAGAVHAGTPATRAEHAESALA) is disordered. Residues 767–776 (RAEHAESALA) show a composition bias toward basic and acidic residues.

It belongs to the vitamin-B12 independent methionine synthase family. Zn(2+) is required as a cofactor.

The enzyme catalyses 5-methyltetrahydropteroyltri-L-glutamate + L-homocysteine = tetrahydropteroyltri-L-glutamate + L-methionine. Its pathway is amino-acid biosynthesis; L-methionine biosynthesis via de novo pathway; L-methionine from L-homocysteine (MetE route): step 1/1. Its function is as follows. Catalyzes the transfer of a methyl group from 5-methyltetrahydrofolate to homocysteine resulting in methionine formation. This chain is 5-methyltetrahydropteroyltriglutamate--homocysteine methyltransferase, found in Ralstonia nicotianae (strain ATCC BAA-1114 / GMI1000) (Ralstonia solanacearum).